Consider the following 335-residue polypeptide: Cell division protein ZipA (335 aa).

Topologically, residues 1–4 (MDLN) are periplasmic. Residues 5 to 25 (AILIILGVIALIILVAHGIWS) form a helical membrane-spanning segment. Residues 26 to 335 (NRCEKSQYFE…AERDYLARVS (310 aa)) lie on the Cytoplasmic side of the membrane.

This sequence belongs to the ZipA family. Interacts with FtsZ via their C-terminal domains.

It is found in the cell inner membrane. In terms of biological role, essential cell division protein that stabilizes the FtsZ protofilaments by cross-linking them and that serves as a cytoplasmic membrane anchor for the Z ring. Also required for the recruitment to the septal ring of downstream cell division proteins. This chain is Cell division protein ZipA, found in Histophilus somni (strain 129Pt) (Haemophilus somnus).